A 454-amino-acid chain; its full sequence is Aquaporin-7 (454 aa).

Over 1 to 71 (MNINEPRDGG…LHLHNKTRNH (71 aa)) the chain is Cytoplasmic. Residues 72 to 92 (FVATVAEFAGTTLFLFFAFSG) form a helical membrane-spanning segment. Over 93–115 (TQVALLATPANDSNVVGTPSNPA) the chain is Extracellular. Asn103 carries an N-linked (GlcNAc...) asparagine glycan. Residues 116–136 (QLLYVSLCFGFSLAVNAWVFF) form a helical membrane-spanning segment. At 137-163 (RISGGLFNPAVTMGMCIVGALPYFRGL) the chain is on the cytoplasmic side. Positions 144–146 (NPA) match the NPA 1 motif. A helical transmembrane segment spans residues 164–184 (LLIFAQIIGGIAAAAIVSALF). Residues 185–202 (PGPITFRTSLGGGTSIVQ) are Extracellular-facing. A helical membrane pass occupies residues 203–223 (GLFIEMFLTAELVFTIFMLAA). Residues 224–229 (EKHKGT) lie on the Cytoplasmic side of the membrane. Residues 230–250 (FIAPIGIGLSLFIAELTGVYF) traverse the membrane as a helical segment. The Extracellular portion of the chain corresponds to 251–274 (TGGSVNPARSFGPSVVSGQFTGYH). Residues 256 to 258 (NPA) carry the NPA 2 motif. The chain crosses the membrane as a helical span at residues 275-295 (WIYWVGPILGAILASAFYKFI). The Cytoplasmic segment spans residues 296–454 (KMLEYETANP…ENLRDNTHNN (159 aa)). Positions 343–454 (GASHVHENGN…ENLRDNTHNN (112 aa)) are disordered.

Belongs to the MIP/aquaporin (TC 1.A.8) family.

The protein resides in the membrane. It carries out the reaction H2O(in) = H2O(out). In terms of biological role, water channel required to facilitate the transport of water across membranes. Involved in conidiation. The sequence is that of Aquaporin-7 from Botryotinia fuckeliana (strain B05.10) (Noble rot fungus).